Consider the following 104-residue polypeptide: Large ribosomal subunit protein uL24 (104 aa).

The protein belongs to the universal ribosomal protein uL24 family. Part of the 50S ribosomal subunit.

In terms of biological role, one of two assembly initiator proteins, it binds directly to the 5'-end of the 23S rRNA, where it nucleates assembly of the 50S subunit. One of the proteins that surrounds the polypeptide exit tunnel on the outside of the subunit. The protein is Large ribosomal subunit protein uL24 of Clostridium beijerinckii (strain ATCC 51743 / NCIMB 8052) (Clostridium acetobutylicum).